We begin with the raw amino-acid sequence, 407 residues long: Na(+)-translocating NADH-quinone reductase subunit F (407 aa).

A helical transmembrane segment spans residues 3-23; sequence IILGVVMFTLIVLALVLVILF. Positions 32 to 126 constitute a 2Fe-2S ferredoxin-type domain; the sequence is GDITISVNGD…DMDIELPEEI (95 aa). Residues cysteine 69, cysteine 75, cysteine 78, and cysteine 110 each coordinate [2Fe-2S] cluster. The FAD-binding FR-type domain maps to 129 to 269; it reads VKKWECTVIS…SGPFGEFFAK (141 aa). A catalytic region spans residues 272–389; sequence DAEMVFIGGG…PMMNAAVIGM (118 aa).

Belongs to the NqrF family. In terms of assembly, composed of six subunits; NqrA, NqrB, NqrC, NqrD, NqrE and NqrF. It depends on [2Fe-2S] cluster as a cofactor. FAD is required as a cofactor.

The protein localises to the cell inner membrane. The enzyme catalyses a ubiquinone + n Na(+)(in) + NADH + H(+) = a ubiquinol + n Na(+)(out) + NAD(+). Its function is as follows. NQR complex catalyzes the reduction of ubiquinone-1 to ubiquinol by two successive reactions, coupled with the transport of Na(+) ions from the cytoplasm to the periplasm. The first step is catalyzed by NqrF, which accepts electrons from NADH and reduces ubiquinone-1 to ubisemiquinone by a one-electron transfer pathway. The chain is Na(+)-translocating NADH-quinone reductase subunit F from Vibrio parahaemolyticus serotype O3:K6 (strain RIMD 2210633).